The primary structure comprises 412 residues: Imidazolonepropionase (412 aa).

Positions 76 and 78 each coordinate Fe(3+). Residues His-76 and His-78 each contribute to the Zn(2+) site. Residues Arg-85, Tyr-148, and His-181 each coordinate 4-imidazolone-5-propanoate. Tyr-148 is an N-formimidoyl-L-glutamate binding site. His-242 is a binding site for Fe(3+). His-242 contacts Zn(2+). Residue Glu-245 participates in 4-imidazolone-5-propanoate binding. Asp-317 contributes to the Fe(3+) binding site. Residue Asp-317 coordinates Zn(2+). Asn-319 and Gly-321 together coordinate N-formimidoyl-L-glutamate. Residue Ser-322 coordinates 4-imidazolone-5-propanoate.

Belongs to the metallo-dependent hydrolases superfamily. HutI family. Requires Zn(2+) as cofactor. Fe(3+) serves as cofactor.

Its subcellular location is the cytoplasm. It carries out the reaction 4-imidazolone-5-propanoate + H2O = N-formimidoyl-L-glutamate. It participates in amino-acid degradation; L-histidine degradation into L-glutamate; N-formimidoyl-L-glutamate from L-histidine: step 3/3. In terms of biological role, catalyzes the hydrolytic cleavage of the carbon-nitrogen bond in imidazolone-5-propanoate to yield N-formimidoyl-L-glutamate. It is the third step in the universal histidine degradation pathway. This Staphylococcus aureus (strain MRSA252) protein is Imidazolonepropionase.